The sequence spans 92 residues: MGRSLKKGPFIADSLLKKVEKQNTDNDKSVIKTWSRASTILPLMIGHTIAVHNGKTHIPVFITEQMIGHKLGEFAPTRTYRGHIRDKKGAKS.

Belongs to the universal ribosomal protein uS19 family.

Protein S19 forms a complex with S13 that binds strongly to the 16S ribosomal RNA. This Prochlorococcus marinus (strain MIT 9312) protein is Small ribosomal subunit protein uS19.